A 91-amino-acid polypeptide reads, in one-letter code: Small ribosomal subunit protein uS17 (91 aa).

It belongs to the universal ribosomal protein uS17 family. Part of the 30S ribosomal subunit.

In terms of biological role, one of the primary rRNA binding proteins, it binds specifically to the 5'-end of 16S ribosomal RNA. This is Small ribosomal subunit protein uS17 from Malacoplasma penetrans (strain HF-2) (Mycoplasma penetrans).